The chain runs to 476 residues: Probable protein S-acyltransferase 5 (476 aa).

Over residues 1 to 11 the composition is skewed to basic and acidic residues; the sequence is MLDLQPSDRRH. The tract at residues 1-21 is disordered; the sequence is MLDLQPSDRRHGAPSSSGGVS. The next 2 helical transmembrane spans lie at 53–73 and 85–105; these read SILI…IFVG and GVSV…FLLL. Residues 119 to 138 form a disordered region; the sequence is YPPEPESNEGNGEPRLAHTP. One can recognise a DHHC domain in the interval 158-208; that stretch reads KYCDTCMLYRPPRASHCSICNNCVEKFDHHCPWLGQCIGLRNYRFYFMFVL. Cys-188 (S-palmitoyl cysteine intermediate) is an active-site residue. The next 2 membrane-spanning stretches (helical) occupy residues 209–223 and 246–266; these read CSTL…FCWI and SIAL…LTCF. 2 disordered regions span residues 320-340 and 373-454; these read SKEP…PSLQ and VASR…ASRD. The residue at position 336 (Ser-336) is a Phosphoserine. Positions 387–412 are enriched in basic and acidic residues; that stretch reads SEGRGIMHSRESSRGRGIMHSRESSR. At Ser-418 the chain carries Phosphoserine. Positions 425-441 are enriched in basic and acidic residues; sequence VNEDLRTRDESVSRVGE.

Belongs to the DHHC palmitoyltransferase family.

The protein localises to the cell membrane. It carries out the reaction L-cysteinyl-[protein] + hexadecanoyl-CoA = S-hexadecanoyl-L-cysteinyl-[protein] + CoA. Functionally, palmitoyl acyltransferase. This is Probable protein S-acyltransferase 5 (PAT05) from Arabidopsis thaliana (Mouse-ear cress).